A 405-amino-acid chain; its full sequence is MSFPSLQEQLDIITANTVEIISSAELEQKIQHSIKTGAPLKVKLGADPSRPDLHLGHSVVLRKLREFQDLGHEAILIIGDFTAMIGDPSGKSKTRPQLSAEEARENGASYFEQASKILDPHKTTICYNADWLGNMTFADVIRLSSHYTVARMLERDDFERRYRSSEPISIHEFLYPLAQAMDSVHLRNDVELGGTDQKFNLLVGRDLQREYGILPQVCITMPLLVGTGGEDKMSKSLGNAVCFNDLPSDMYGRVLSIPDTLIENWCRLLLPLTGEGRRAILEGWEEDPRTAKRRLAREIVMQYYSAGEAGAAEEHFDRLFVHKQAPTEIELTRFSEPELPLVDLLTTLGAAASKTDARRMIQQNAVSIDEEKITDVKTIITLSDEPKTLKAGKRKFFRIATAGNS.

A 'HIGH' region motif is present at residues 48–57 (PSRPDLHLGH). A 'KMSKS' region motif is present at residues 232–236 (KMSKS). Lys-235 contributes to the ATP binding site. Positions 339 to 400 (LPLVDLLTTL…AGKRKFFRIA (62 aa)) constitute an S4 RNA-binding domain.

The protein belongs to the class-I aminoacyl-tRNA synthetase family. TyrS type 2 subfamily. As to quaternary structure, homodimer.

It is found in the cytoplasm. It carries out the reaction tRNA(Tyr) + L-tyrosine + ATP = L-tyrosyl-tRNA(Tyr) + AMP + diphosphate + H(+). In terms of biological role, catalyzes the attachment of tyrosine to tRNA(Tyr) in a two-step reaction: tyrosine is first activated by ATP to form Tyr-AMP and then transferred to the acceptor end of tRNA(Tyr). In Chlorobium luteolum (strain DSM 273 / BCRC 81028 / 2530) (Pelodictyon luteolum), this protein is Tyrosine--tRNA ligase.